A 342-amino-acid polypeptide reads, in one-letter code: Glycerol-3-phosphate dehydrogenase [NAD(P)+] (342 aa).

The NADPH site is built by W11, R33, and K107. Sn-glycerol 3-phosphate contacts are provided by K107, G143, and S145. A147 is an NADPH binding site. Sn-glycerol 3-phosphate contacts are provided by K198, D251, S261, R262, and N263. Catalysis depends on K198, which acts as the Proton acceptor. NADPH is bound at residue R262. 2 residues coordinate NADPH: V286 and E288.

Belongs to the NAD-dependent glycerol-3-phosphate dehydrogenase family.

Its subcellular location is the cytoplasm. It catalyses the reaction sn-glycerol 3-phosphate + NAD(+) = dihydroxyacetone phosphate + NADH + H(+). The catalysed reaction is sn-glycerol 3-phosphate + NADP(+) = dihydroxyacetone phosphate + NADPH + H(+). It participates in membrane lipid metabolism; glycerophospholipid metabolism. Functionally, catalyzes the reduction of the glycolytic intermediate dihydroxyacetone phosphate (DHAP) to sn-glycerol 3-phosphate (G3P), the key precursor for phospholipid synthesis. This Paracidovorax citrulli (strain AAC00-1) (Acidovorax citrulli) protein is Glycerol-3-phosphate dehydrogenase [NAD(P)+].